Here is an 89-residue protein sequence, read N- to C-terminus: Acyl-CoA-binding protein (89 aa).

Residues 3–88 (LKEEFEEHAE…VKQLFEAAGS (86 aa)) form the ACB domain. An acyl-CoA is bound by residues 30-34 (YGLYK), Lys56, and Tyr75.

This sequence belongs to the ACBP family.

Its function is as follows. Binds medium- and long-chain acyl-CoA esters with very high affinity and may function as an intracellular carrier of acyl-CoA esters. This Gossypium hirsutum (Upland cotton) protein is Acyl-CoA-binding protein.